The chain runs to 216 residues: MRGILGLVFGSVILIYLISLFLMKHPFFQIREIKVSGLYVEEIEKIEKDIHALGRGLLVIPESNILELFNEKLNNRFQGVEINKRFSTEGITIEMNFQRRKAISFVNINEKKFLMDMEGIFFWDEYQKPDKTLFIYSKEVFQFFKQKILKLLTQGNSVKVYKDKVMVDIGGKRFILPPLEDINEKEIHLMKKLLKLHPDAKIFDIRYKGFILLNEG.

A helical membrane pass occupies residues 5–22 (LGLVFGSVILIYLISLFL).

Its subcellular location is the membrane. This is an uncharacterized protein from Aquifex aeolicus (strain VF5).